The sequence spans 432 residues: Glutamyl-tRNA reductase (432 aa).

Substrate-binding positions include Thr-50–Arg-53, Ser-110, Glu-115–Gln-117, and Gln-121. The active-site Nucleophile is the Cys-51. Gly-190 to Ser-195 is an NADP(+) binding site.

The protein belongs to the glutamyl-tRNA reductase family. Homodimer.

It catalyses the reaction (S)-4-amino-5-oxopentanoate + tRNA(Glu) + NADP(+) = L-glutamyl-tRNA(Glu) + NADPH + H(+). The protein operates within porphyrin-containing compound metabolism; protoporphyrin-IX biosynthesis; 5-aminolevulinate from L-glutamyl-tRNA(Glu): step 1/2. In terms of biological role, catalyzes the NADPH-dependent reduction of glutamyl-tRNA(Glu) to glutamate 1-semialdehyde (GSA). This Aliarcobacter butzleri (strain RM4018) (Arcobacter butzleri) protein is Glutamyl-tRNA reductase.